The following is a 423-amino-acid chain: Deferrochelatase (423 aa).

Residues 1–35 (MQYEDENGVNEPSRRRLLKGIGALALAGSCPVAHA) constitute a signal peptide (tat-type signal). Heme b contacts are provided by residues 236–238 (GTA), His-329, 334–336 (NPR), and Arg-347.

It belongs to the DyP-type peroxidase family. EfeB subfamily. Homodimer. Part of a ferrous iron transporter composed of EfeU, EfeO and EfeB. It depends on heme b as a cofactor. Post-translationally, predicted to be exported by the Tat system. The position of the signal peptide cleavage has not been experimentally proven.

The protein localises to the periplasm. The enzyme catalyses heme b + 2 H(+) = protoporphyrin IX + Fe(2+). Involved in the recovery of exogenous heme iron. Extracts iron from heme while preserving the protoporphyrin ring intact. The sequence is that of Deferrochelatase (efeB) from Escherichia coli O6:K15:H31 (strain 536 / UPEC).